We begin with the raw amino-acid sequence, 86 residues long: High affinity immunoglobulin epsilon receptor subunit gamma (86 aa).

The signal sequence occupies residues 1–18 (MISAVILFLLLLVEQAAA). Residues 19 to 23 (LGEPQ) lie on the Extracellular side of the membrane. A helical transmembrane segment spans residues 24-44 (LCYILDAVLFLYGIVLTLLYC). Over 45–86 (RLKIQVRKAAIASREKADAVYTGLNTRSQETYETLKHEKPPQ) the chain is Cytoplasmic. In terms of domain architecture, ITAM spans 54 to 82 (AIASREKADAVYTGLNTRSQETYETLKHE). Phosphotyrosine occurs at positions 65 and 76. A Phosphothreonine modification is found at T78.

The protein belongs to the CD3Z/FCER1G family. In terms of assembly, igE Fc receptor is a tetramer of an alpha chain, a beta chain, and two disulfide linked gamma chains. Associates with FCGR1A; forms a functional signaling complex. The signaling subunit of immunoglobulin gamma (IgG) Fc receptor complex. As a homodimer or a heterodimer of CD247 and FCER1G, associates with the ligand binding subunit FCGR3A to form a functional receptor complex. Associates with CLEC6A. Interacts with CLEC4E. Interacts (via ITAM domain) with SYK (via SH2 domains); activates SYK, enabling integrin-mediated activation of neutrophils and macrophages. Interacts with CSF2RB and recruits SYK in response to IL3 stimulation; this interaction is direct. Interacts with CD300LH; the interaction may be indirect. Interacts with CD300LD. Interacts with TARM1. Expressed in mast cells (at protein level). Expressed in basophils (at protein level).

Its subcellular location is the cell membrane. Its function is as follows. Adapter protein containing an immunoreceptor tyrosine-based activation motif (ITAM) that transduces activation signals from various immunoreceptors. As a component of the high-affinity immunoglobulin E (IgE) receptor, mediates allergic inflammatory signaling in mast cells. As a constitutive component of interleukin-3 receptor complex, selectively mediates interleukin 4/IL4 production by basophils, priming T-cells toward effector T-helper 2 subset. Associates with pattern recognition receptors CLEC4D and CLEC4E to form a functional signaling complex in myeloid cells. Binding of mycobacterial trehalose 6,6'-dimycolate (TDM) to this receptor complex leads to phosphorylation of ITAM, triggering activation of SYK, CARD9 and NF-kappa-B, consequently driving maturation of antigen-presenting cells and shaping antigen-specific priming of T-cells toward effector T-helper 1 and T-helper 17 cell subtypes. May function cooperatively with other activating receptors. Functionally linked to integrin beta-2/ITGB2-mediated neutrophil activation. Also involved in integrin alpha-2/ITGA2-mediated platelet activation. This is High affinity immunoglobulin epsilon receptor subunit gamma from Mus musculus (Mouse).